Here is a 59-residue protein sequence, read N- to C-terminus: Large ribosomal subunit protein uL30 (59 aa).

Belongs to the universal ribosomal protein uL30 family. Part of the 50S ribosomal subunit.

This chain is Large ribosomal subunit protein uL30, found in Bacillus subtilis (strain 168).